The chain runs to 927 residues: Protein translocase subunit SecA (927 aa).

ATP-binding positions include Q86, 104-108 (GEGKT), and D494. The disordered stretch occupies residues 853-927 (YTAPDEDGTP…GSKAKRGKRR (75 aa)). The span at 860-879 (GTPHAEVEAVDPGARERTSE) shows a compositional bias: basic and acidic residues. The span at 907–927 (RAKRRGASARSGSKAKRGKRR) shows a compositional bias: basic residues.

The protein belongs to the SecA family. As to quaternary structure, monomer and homodimer. Part of the essential Sec protein translocation apparatus which comprises SecA, SecYEG and auxiliary proteins SecDF. Other proteins may also be involved.

It is found in the cell membrane. The protein resides in the cytoplasm. The catalysed reaction is ATP + H2O + cellular proteinSide 1 = ADP + phosphate + cellular proteinSide 2.. Functionally, part of the Sec protein translocase complex. Interacts with the SecYEG preprotein conducting channel. Has a central role in coupling the hydrolysis of ATP to the transfer of proteins into and across the cell membrane, serving as an ATP-driven molecular motor driving the stepwise translocation of polypeptide chains across the membrane. The chain is Protein translocase subunit SecA from Kocuria rhizophila (strain ATCC 9341 / DSM 348 / NBRC 103217 / DC2201).